The sequence spans 290 residues: Pyridoxal kinase PdxY (290 aa).

Substrate contacts are provided by residues S12 and 47-48 (TQ). Residues D114, E151, K184, and 211-214 (RPLL) each bind ATP. D225 is a substrate binding site.

This sequence belongs to the pyridoxine kinase family. PdxY subfamily. In terms of assembly, homodimer. The cofactor is Mg(2+).

It carries out the reaction pyridoxal + ATP = pyridoxal 5'-phosphate + ADP + H(+). It functions in the pathway cofactor metabolism; pyridoxal 5'-phosphate salvage; pyridoxal 5'-phosphate from pyridoxal: step 1/1. Functionally, pyridoxal kinase involved in the salvage pathway of pyridoxal 5'-phosphate (PLP). Catalyzes the phosphorylation of pyridoxal to PLP. The chain is Pyridoxal kinase PdxY from Pseudomonas putida (strain ATCC 700007 / DSM 6899 / JCM 31910 / BCRC 17059 / LMG 24140 / F1).